Consider the following 313-residue polypeptide: uncharacterized protein (313 aa).

The protein to M.jannaschii MJ0977 C-terminal region.

This is an uncharacterized protein from Methanocaldococcus jannaschii (strain ATCC 43067 / DSM 2661 / JAL-1 / JCM 10045 / NBRC 100440) (Methanococcus jannaschii).